Reading from the N-terminus, the 726-residue chain is Catalase-peroxidase (726 aa).

The disordered stretch occupies residues 1–33; the sequence is MSTSDDIHNTTATGKCPFHQGGHDQSAGAGTTT. The segment at residues 105–226 is a cross-link (tryptophyl-tyrosyl-methioninium (Trp-Tyr) (with M-252)); that stretch reads WHGAGTYRSI…LGATEMGLIY (122 aa). Histidine 106 serves as the catalytic Proton acceptor. A cross-link (tryptophyl-tyrosyl-methioninium (Tyr-Met) (with W-105)) is located at residues 226–252; sequence YVNPEGPDHSGEPLSAAAAIRATFGNM. A heme b-binding site is contributed by histidine 267.

Belongs to the peroxidase family. Peroxidase/catalase subfamily. In terms of assembly, homodimer or homotetramer. It depends on heme b as a cofactor. Formation of the three residue Trp-Tyr-Met cross-link is important for the catalase, but not the peroxidase activity of the enzyme.

The enzyme catalyses H2O2 + AH2 = A + 2 H2O. It carries out the reaction 2 H2O2 = O2 + 2 H2O. Functionally, bifunctional enzyme with both catalase and broad-spectrum peroxidase activity. The protein is Catalase-peroxidase of Escherichia coli (strain K12 / DH10B).